The sequence spans 487 residues: L-tartrate/succinate antiporter (487 aa).

Topologically, residues 1 to 9 are periplasmic; the sequence is MKPSTEWWR. Residues 10 to 30 form a helical membrane-spanning segment; the sequence is YLAPLAVIAIIALLPVPAGLE. At 31–32 the chain is on the cytoplasmic side; the sequence is NH. 2 consecutive transmembrane segments (helical) span residues 33 to 53 and 54 to 74; these read TWLY…EPVP and GAVV…WLLF. Over 75 to 92 the chain is Cytoplasmic; that stretch reads SPEQLAQPGFKFTAKSLS. The chain crosses the membrane as a helical span at residues 93–113; sequence WAVSGFSNSVIWLIFAAFMFG. The Periplasmic segment spans residues 114–136; the sequence is TGYEKTGLGRRIALILVKKMGHR. The helical transmembrane segment at 137-157 threads the bilayer; the sequence is TLFLGYAVMFSELILAPVTPS. Topologically, residues 158-188 are cytoplasmic; sequence NSARGAGIIYPIIRNLPPLYQSQPNDSSSRS. A helical transmembrane segment spans residues 189-209; the sequence is IGSYIMWMGIVADCVTSAIFL. The Periplasmic segment spans residues 210–235; it reads TAMAPNLLLIGLMKSASHATLSWGDW. A helical transmembrane segment spans residues 236–256; that stretch reads FLGMLPLSILLVLLVPWLAYV. Over 257–291 the chain is Cytoplasmic; it reads LYPPVLKSGDQVPRWAETELQAMGPLCSREKRMLG. The next 2 membrane-spanning stretches (helical) occupy residues 292–312 and 313–333; these read LMVG…AAMV and GYSV…DIVS. At 334 to 339 the chain is on the cytoplasmic side; the sequence is NKAAWN. The chain crosses the membrane as a helical span at residues 340-360; the sequence is VFFWLASLITLATGLNNTGFI. Over 361–369 the chain is Periplasmic; sequence SWFGKLLAG. A helical membrane pass occupies residues 370-390; sequence SLSGYSPTMVMVALIVVFYLL. Residues 391–392 are Cytoplasmic-facing; sequence RY. A helical transmembrane segment spans residues 393–413; the sequence is FFASATAYTSALAPMMIAAAL. Over 414–417 the chain is Periplasmic; it reads AMPE. Residues 418 to 438 traverse the membrane as a helical segment; the sequence is IPLPVFCLMVGAAIGLGSILT. Residues 439–464 lie on the Cytoplasmic side of the membrane; it reads PYATGPSPIYYGSGYLPTADYWRLGA. Residues 465–485 form a helical membrane-spanning segment; the sequence is IFGLIFLVLLVITGLLWMPVV. Residues 486–487 are Periplasmic-facing; the sequence is LL.

This sequence belongs to the SLC13A/DASS transporter (TC 2.A.47) family. DIT1 subfamily.

The protein resides in the cell inner membrane. The catalysed reaction is (2R,3R)-tartrate(out) + succinate(in) = (2R,3R)-tartrate(in) + succinate(out). Its function is as follows. Catalyzes the uptake of tartrate in exchange for intracellular succinate. Essential for anaerobic L-tartrate fermentation. This chain is L-tartrate/succinate antiporter, found in Escherichia coli (strain K12).